The primary structure comprises 285 residues: Nucleotide-binding protein Psyr_4150 (285 aa).

Residue 8-15 coordinates ATP; sequence GRSGSGKS. A GTP-binding site is contributed by 60–63; sequence DARN.

The protein belongs to the RapZ-like family.

Functionally, displays ATPase and GTPase activities. This Pseudomonas syringae pv. syringae (strain B728a) protein is Nucleotide-binding protein Psyr_4150.